The chain runs to 1167 residues: MEEVIWEQYTVTLQKDSKRGFGIAVSGGRDNPHFENGETSIVISDVLPGGPADGLLQENDRVVMVNGTPMEDVLHSFAVQQLRKSGKIAAIVVKRPRKVQVAPLQGSPPLSHDDRGFEVIEEFDGRSFRSGYSERSRHSSHDMLSHSWEGNRERGRPHQRTQSRERERSRGRSLERGLDQEDYGRSRERSRGRSLERGLDRDFVSRDHSRGRSIDRDYDRDYERSYHEAYEPDYGGGYSPSYDRRAHPETRYERSRSREHLRSRSPSPESRSRHEHKGQHDPDRPIGVLLTKSKANEEYGLRLGSQIFIKEMTRTGLATKDGNLHEGDIILKINGTVTENMSLTDARKLIEKSRGKLQLVVLRDSKQTLINIPALNDSDSEVEDISEIESNRSFSPEERRQQYSDQDYHSSTEKLKERPSSREETSGRLSRMGATPTPFKSTGDITAAGVTEASREPRYQEEGPVPQPRTAPRVFLRPSPEDEAIYGPNTKMVRFKKGDSVGLRLAGGNDVGIFVAGIQEGTSAEQEGLQEGDQILKVNTQDFRGLVREDAVLYLLEIPKGETVTILAQSRADVYRDILACGRGDSFFIRSHFECEKETPQSLAFTRGEVFRVVDTLYDGKLGHWLAVRIGNELEKGLIPNKSRAEQMASVQNAQRENAGDRADFWRMRGQRSSGGVKKNLRKSREDLAAAVSVSTKFPAYEKVLLREAGFKRPVVLFGPIADIAMERLATELPDLFQTAKTEPKDAGSEKSSGVVRLNTVRQIIEQDKHALLDVTPKAVDLLNYTQWFPIVIFFNPDSRQGVKTIRQRLSPTSNKSSRKLFDQANKLKKTCSHLFTATINVNSANDGWFGSLKDSIQQQQNEAVWVSEGKMEGMDDDAEDRMSYLTAMGADYLSCDSRLISDFEDTDGEGGAYTDNELEEPAEEPLVSSITRSSEPVQHEENIRKSSPEPRAQMRRAASRDQLRDASPPPAFKPEPPKARSQNREDSFDYSKSNLPATAGSEIPGGSTKGYPPPIAAKPAFGRPILKPSTPVPMPESEEVGESTEEQEDAPRSVLGRVKIFEKMDHKAKLQRMQELQEAQNARIEIAQKHPDIYAVPIKAPKPDAGLPPHMSSRPPEPQKAPSRLYQDTRGSYGSDPEEEEYRQQLAAHSKRGYYSQPSRYRDTEL.

The PDZ 1 domain occupies T10 to R97. Phosphoserine is present on residues S107, S127, S130, S140, S145, S147, S173, S194, S205, and S239. A disordered region spans residues R129–L195. A disordered region spans residues S225–I286. Residues Y242–R262 show a composition bias toward basic and acidic residues. Residues G287–S365 enclose the PDZ 2 domain. Residues S305, S378, S380, S386, S395, S404, S410, and S411 each carry the phosphoserine modification. The segment at E381–I485 is disordered. Positions S395 to S426 are enriched in basic and acidic residues. At T435 the chain carries Phosphothreonine. Residue S479 is modified to Phosphoserine. In terms of domain architecture, PDZ 3 spans N489 to S570. Residue Y554 is modified to Phosphotyrosine. An SH3 domain is found at G584–A649. Residues G660–Q858 form the Guanylate kinase-like domain. A phosphoserine mark is found at S684 and S884. T887 is modified (phosphothreonine). 2 positions are modified to phosphoserine: S895 and S902. Disordered stretches follow at residues F904–V1055 and Y1095–L1167. T907 and T915 each carry phosphothreonine. Residues V938 to P949 are compositionally biased toward basic and acidic residues. 5 positions are modified to phosphoserine: S948, S960, S968, S988, and S1044. Residues E976–D990 show a composition bias toward basic and acidic residues. The span at E1037–E1049 shows a compositional bias: acidic residues. The residue at position 1095 (Y1095) is a Phosphotyrosine. Phosphoserine is present on residues S1124 and S1136. The interaction with SCRIB stretch occupies residues T1165 to L1167.

The protein belongs to the MAGUK family. In terms of assembly, homodimer. Interacts (via PDZ2 domain) with TJP1/ZO1 (via PDZ2 domain). Interacts with UBN1. Interacts with SCRIB. Interacts with OCLN. Interacts with SAFB in the nucleus. Interacts with USP53 (via the C-terminal region). Interacts with claudins, including CLDN1, CLDN2, CLDN3, CLDN5 and CLDN7. Interacts with CLDN18. Interacts (via N-terminus) with CTNNA1.

It is found in the cell junction. Its subcellular location is the adherens junction. The protein resides in the cell membrane. It localises to the nucleus. The protein localises to the tight junction. Its function is as follows. Plays a role in tight junctions and adherens junctions. Acts as a positive regulator of RANKL-induced osteoclast differentiation, potentially via mediating downstream transcriptional activity. This chain is Tight junction protein 2, found in Mus musculus (Mouse).